The primary structure comprises 401 residues: 4-hydroxy-3-methylbut-2-en-1-yl diphosphate synthase (ferredoxin) (401 aa).

The [4Fe-4S] cluster site is built by Cys306, Cys309, Cys340, and Glu347.

Belongs to the IspG family. The cofactor is [4Fe-4S] cluster.

It carries out the reaction (2E)-4-hydroxy-3-methylbut-2-enyl diphosphate + 2 oxidized [2Fe-2S]-[ferredoxin] + H2O = 2-C-methyl-D-erythritol 2,4-cyclic diphosphate + 2 reduced [2Fe-2S]-[ferredoxin] + H(+). The protein operates within isoprenoid biosynthesis; isopentenyl diphosphate biosynthesis via DXP pathway; isopentenyl diphosphate from 1-deoxy-D-xylulose 5-phosphate: step 5/6. Functionally, converts 2C-methyl-D-erythritol 2,4-cyclodiphosphate (ME-2,4cPP) into 1-hydroxy-2-methyl-2-(E)-butenyl 4-diphosphate. The sequence is that of 4-hydroxy-3-methylbut-2-en-1-yl diphosphate synthase (ferredoxin) from Synechococcus sp. (strain CC9902).